Consider the following 209-residue polypeptide: Redox-sensing transcriptional repressor Rex (209 aa).

Positions Leu-16–Phe-55 form a DNA-binding region, H-T-H motif. Gly-90 to Gly-95 contacts NAD(+).

It belongs to the transcriptional regulatory Rex family. As to quaternary structure, homodimer.

It is found in the cytoplasm. In terms of biological role, modulates transcription in response to changes in cellular NADH/NAD(+) redox state. This Bacillus cytotoxicus (strain DSM 22905 / CIP 110041 / 391-98 / NVH 391-98) protein is Redox-sensing transcriptional repressor Rex.